Reading from the N-terminus, the 446-residue chain is Probable D-serine dehydratase (446 aa).

Lys116 carries the N6-(pyridoxal phosphate)lysine modification.

It belongs to the serine/threonine dehydratase family. DsdA subfamily. The cofactor is pyridoxal 5'-phosphate.

It carries out the reaction D-serine = pyruvate + NH4(+). The sequence is that of Probable D-serine dehydratase from Bacillus thuringiensis subsp. konkukian (strain 97-27).